The following is a 264-amino-acid chain: Segregation and condensation protein A (264 aa).

Belongs to the ScpA family. In terms of assembly, component of a cohesin-like complex composed of ScpA, ScpB and the Smc homodimer, in which ScpA and ScpB bind to the head domain of Smc. The presence of the three proteins is required for the association of the complex with DNA.

It localises to the cytoplasm. In terms of biological role, participates in chromosomal partition during cell division. May act via the formation of a condensin-like complex containing Smc and ScpB that pull DNA away from mid-cell into both cell halves. This chain is Segregation and condensation protein A, found in Enterococcus faecalis (strain ATCC 700802 / V583).